The chain runs to 179 residues: Large ribosomal subunit protein uL5 (179 aa).

This sequence belongs to the universal ribosomal protein uL5 family. As to quaternary structure, part of the 50S ribosomal subunit; part of the 5S rRNA/L5/L18/L25 subcomplex. Contacts the 5S rRNA and the P site tRNA. Forms a bridge to the 30S subunit in the 70S ribosome.

In terms of biological role, this is one of the proteins that bind and probably mediate the attachment of the 5S RNA into the large ribosomal subunit, where it forms part of the central protuberance. In the 70S ribosome it contacts protein S13 of the 30S subunit (bridge B1b), connecting the 2 subunits; this bridge is implicated in subunit movement. Contacts the P site tRNA; the 5S rRNA and some of its associated proteins might help stabilize positioning of ribosome-bound tRNAs. This Desulfosudis oleivorans (strain DSM 6200 / JCM 39069 / Hxd3) (Desulfococcus oleovorans) protein is Large ribosomal subunit protein uL5.